A 316-amino-acid polypeptide reads, in one-letter code: Porphobilinogen deaminase (316 aa).

Cys245 is modified (S-(dipyrrolylmethanemethyl)cysteine).

The protein belongs to the HMBS family. Monomer. The cofactor is dipyrromethane.

The catalysed reaction is 4 porphobilinogen + H2O = hydroxymethylbilane + 4 NH4(+). Its pathway is porphyrin-containing compound metabolism; protoporphyrin-IX biosynthesis; coproporphyrinogen-III from 5-aminolevulinate: step 2/4. It functions in the pathway porphyrin-containing compound metabolism; chlorophyll biosynthesis. Functionally, tetrapolymerization of the monopyrrole PBG into the hydroxymethylbilane pre-uroporphyrinogen in several discrete steps. In Prochlorococcus marinus (strain AS9601), this protein is Porphobilinogen deaminase.